A 268-amino-acid polypeptide reads, in one-letter code: tRNA pseudouridine synthase A (268 aa).

Asp52 (nucleophile) is an active-site residue. Tyr110 serves as a coordination point for substrate.

This sequence belongs to the tRNA pseudouridine synthase TruA family. In terms of assembly, homodimer.

It catalyses the reaction uridine(38/39/40) in tRNA = pseudouridine(38/39/40) in tRNA. Functionally, formation of pseudouridine at positions 38, 39 and 40 in the anticodon stem and loop of transfer RNAs. The polypeptide is tRNA pseudouridine synthase A (Prochlorococcus marinus subsp. pastoris (strain CCMP1986 / NIES-2087 / MED4)).